The primary structure comprises 146 residues: Hemoglobin subunit beta-2 (146 aa).

Residues 2 to 146 form the Globin domain; it reads HWTAEEKQLV…VAHALAYHYH (145 aa). Heme b-binding residues include histidine 63 and histidine 92.

Belongs to the globin family. As to quaternary structure, there are three forms of hemoglobin in Sphenodon: A, A' and D. Hb A is a tetramer of two alpha-A and two beta-1, Hb A' is a tetramer of two alpha-a and two beta-2, Hb D is a tetramer of two alpha-D and two beta-2.

Functionally, involved in oxygen transport from the lung to the various peripheral tissues. This Sphenodon punctatus (Tuatara) protein is Hemoglobin subunit beta-2 (HBB2).